The primary structure comprises 182 residues: MAIKTVLGEAQQIKIATDLIVLGARLQVLQEETSLSRERLLKLYKEVRGESPSKGMLPYSTDWFISWQPNIHSSLFMGIYQFMIKNAGVDGVHALISAYRLYLDQVQGIEGGEVVLSITRAWFLVRFFKAGMMQLITCRECSGKFVTHTNELHNNYVCGICHPPARAGKTNAKARLLAGHAE.

Positions 138, 141, 158, and 161 each coordinate Zn(2+).

This sequence belongs to the FlhC family. Heterohexamer composed of two FlhC and four FlhD subunits. Each FlhC binds a FlhD dimer, forming a heterotrimer, and a hexamer assembles by dimerization of two heterotrimers. Zn(2+) serves as cofactor.

It localises to the cytoplasm. Its function is as follows. Functions in complex with FlhD as a master transcriptional regulator that regulates transcription of several flagellar and non-flagellar operons by binding to their promoter region. Activates expression of class 2 flagellar genes, including fliA, which is a flagellum-specific sigma factor that turns on the class 3 genes. Also regulates genes whose products function in a variety of physiological pathways. The sequence is that of Flagellar transcriptional regulator FlhC from Gallionella capsiferriformans (strain ES-2) (Gallionella ferruginea capsiferriformans (strain ES-2)).